The following is a 285-amino-acid chain: Nucleotide-binding protein Cphy_0331 (285 aa).

An ATP-binding site is contributed by 8–15 (GMSGAGKS). 59-62 (DIRS) lines the GTP pocket.

The protein belongs to the RapZ-like family.

Displays ATPase and GTPase activities. This Lachnoclostridium phytofermentans (strain ATCC 700394 / DSM 18823 / ISDg) (Clostridium phytofermentans) protein is Nucleotide-binding protein Cphy_0331.